The sequence spans 191 residues: MARRKAAPKRETLPDPLFHSELLAKFINAVMRNGKKSVAEKIVYGALDVVAKRVQNKSGEQGDGDGEGGGKAGGIKKRSLGDIRTDENARALALETFKGALDKVMPNVEVKSRRVGGSTYQVPVEIRMARRQALARRWLVEYANKRNEKTMVLRLAHEILDAVEGRGGAIKKREDVHRMAKANQAFAHYRW.

Positions 56 to 80 are disordered; it reads NKSGEQGDGDGEGGGKAGGIKKRSL.

The protein belongs to the universal ribosomal protein uS7 family. In terms of assembly, part of the 30S ribosomal subunit. Contacts proteins S9 and S11.

Functionally, one of the primary rRNA binding proteins, it binds directly to 16S rRNA where it nucleates assembly of the head domain of the 30S subunit. Is located at the subunit interface close to the decoding center, probably blocks exit of the E-site tRNA. This is Small ribosomal subunit protein uS7 from Coxiella burnetii (strain CbuG_Q212) (Coxiella burnetii (strain Q212)).